The chain runs to 293 residues: Ribosomal protein L11 methyltransferase (293 aa).

Thr-145, Gly-166, Asp-188, and Asn-230 together coordinate S-adenosyl-L-methionine.

This sequence belongs to the methyltransferase superfamily. PrmA family.

It localises to the cytoplasm. It catalyses the reaction L-lysyl-[protein] + 3 S-adenosyl-L-methionine = N(6),N(6),N(6)-trimethyl-L-lysyl-[protein] + 3 S-adenosyl-L-homocysteine + 3 H(+). Its function is as follows. Methylates ribosomal protein L11. The polypeptide is Ribosomal protein L11 methyltransferase (Actinobacillus pleuropneumoniae serotype 5b (strain L20)).